We begin with the raw amino-acid sequence, 31 residues long: MPRRRRASRRIRRRRRPRVSRRRRGGRRRRR.

A disordered region spans residues 1–31 (MPRRRRASRRIRRRRRPRVSRRRRGGRRRRR).

Testis.

It is found in the nucleus. The protein localises to the chromosome. Functionally, protamines substitute for histones in the chromatin of sperm during the haploid phase of spermatogenesis. They compact sperm DNA into a highly condensed, stable and inactive complex. The polypeptide is Protamine PTP4 (Oncorhynchus mykiss (Rainbow trout)).